The chain runs to 1361 residues: uncharacterized protein (1361 aa).

The protein belongs to the IIV-6 261R/396L/443R family.

This is an uncharacterized protein from Invertebrate iridescent virus 6 (IIV-6).